Here is a 243-residue protein sequence, read N- to C-terminus: Probable transcriptional regulatory protein TTE1135 (243 aa).

It belongs to the TACO1 family.

The protein resides in the cytoplasm. The chain is Probable transcriptional regulatory protein TTE1135 from Caldanaerobacter subterraneus subsp. tengcongensis (strain DSM 15242 / JCM 11007 / NBRC 100824 / MB4) (Thermoanaerobacter tengcongensis).